A 388-amino-acid chain; its full sequence is Nocturnin (388 aa).

Glu152 contacts Mg(2+). Residues Glu152, 176 to 178 (KPW), Asn220, 243 to 246 (HLKA), 281 to 283 (DFN), and His371 each bind substrate.

It belongs to the CCR4/nocturin family. It depends on Mg(2+) as a cofactor. As to expression, expressed only in the photoreceptors of the retina. Expression is controlled by the retinal circadian clock.

The protein localises to the cytoplasm. Its subcellular location is the nucleus. It localises to the perinuclear region. It is found in the mitochondrion. The catalysed reaction is NADP(+) + H2O = phosphate + NAD(+). It catalyses the reaction NADPH + H2O = phosphate + NADH. Functionally, phosphatase which catalyzes the conversion of NADP(+) to NAD(+) and of NADPH to NADH. Shows a small preference for NADPH over NADP(+). Component of the circadian clock or downstream effector of clock function. Exhibits a high amplitude circadian rhythm with maximal levels in early evening. In constant darkness or constant light, the amplitude of the rhythm decreases. The chain is Nocturnin from Xenopus laevis (African clawed frog).